The sequence spans 83 residues: MANHQSARKRIRANEAKHLHNRYQLKTCRTAIKQLKQVKDKEQAVTLFKTVVAMLDKSAKRHIIHKNKAANTKSKLAQHINRL.

Belongs to the bacterial ribosomal protein bS20 family.

Functionally, binds directly to 16S ribosomal RNA. The protein is Small ribosomal subunit protein bS20 of Amoebophilus asiaticus (strain 5a2).